We begin with the raw amino-acid sequence, 641 residues long: Homeobox protein ceh-38 (641 aa).

Composition is skewed to polar residues over residues 1–14 and 28–38; these read MESS…TNGT and DPSSTFINNTG. Disordered stretches follow at residues 1–79 and 129–244; these read MESS…TSSA and LHVD…GDRM. Positions 52-79 are enriched in low complexity; it reads TISPHPITPSASTSSATSATEEPATSSA. Residues 131 to 140 show a composition bias toward basic and acidic residues; the sequence is VDSRRRESHD. 2 stretches are compositionally biased toward polar residues: residues 167–183 and 190–204; these read TPTN…SSLL and NTIG…TFGS. The CUT DNA-binding region spans 308–394; that stretch reads NAEIGDDIYI…TRLAILDMKT (87 aa). Disordered regions lie at residues 398–428, 485–508, and 552–641; these read NRAS…PVSK, GGNI…VGDT, and FGVS…LAAN. Residues 427 to 486 constitute a DNA-binding region (homeobox); it reads SKRPRLVFTDIQKRTLQAIFKETQRPSREMQQTIAEHLRLDLSTVANFFMNARRRSRLGG. Over residues 571-604 the composition is skewed to acidic residues; that stretch reads HEDDEELDELNDSELAYEEDVEIGDEEEEDEEQA. A compositionally biased stretch (basic and acidic residues) spans 613-626; the sequence is KVEELEEKTVIKEE.

It belongs to the CUT homeobox family. Expressed in the embryo. After gastrulation, expressed in almost all cells. During larval and adult stages, expressed in the dorsal and ventral nerve cord, head and tail neurons, pharynx, gut and head.

It is found in the nucleus. Probable DNA-binding regulatory protein involved in cell-fate specification. This is Homeobox protein ceh-38 (ceh-38) from Caenorhabditis elegans.